We begin with the raw amino-acid sequence, 549 residues long: Solute carrier family 22 member 6 (549 aa).

Residues 1-23 are Cytoplasmic-facing; sequence MAFNDLLLQLGGVGRFQKIQVTL. A helical transmembrane segment spans residues 24 to 44; sequence VILPLILLASHNTLQNFTAAI. The Extracellular portion of the chain corresponds to 45–135; sequence PTHHCRPPAD…LVCSHRALRQ (91 aa). 3 N-linked (GlcNAc...) asparagine glycosylation sites follow: asparagine 56, asparagine 92, and asparagine 113. The helical transmembrane segment at 136 to 156 threads the bilayer; sequence LAQSLYMMGVLLGAMTFGCLA. Topologically, residues 157–164 are cytoplasmic; sequence DRLGRRKV. Residues 165 to 185 form a helical membrane-spanning segment; it reads LIFNYLQTAVSGTCAAFAPNF. Residues 186-195 lie on the Extracellular side of the membrane; it reads PAYCAFRFLS. Residues 196–216 traverse the membrane as a helical segment; that stretch reads GMSTAGVVLNCMTLNVEWMPI. Residues 217–224 lie on the Cytoplasmic side of the membrane; that stretch reads HTRAYVGT. The helical transmembrane segment at 225–245 threads the bilayer; the sequence is LTGYVYSLGQFLLAGMAYAVP. The Extracellular portion of the chain corresponds to 246–248; the sequence is HWR. The helical transmembrane segment at 249–269 threads the bilayer; that stretch reads YLQLLVSAPFFAFFIYSWFFI. Topologically, residues 270 to 337 are cytoplasmic; that stretch reads ESARWYASSG…ELIRCPALRR (68 aa). A helical membrane pass occupies residues 338-358; sequence LFLCLSMLWFATSFAYYGLVM. Over 359–368 the chain is Extracellular; the sequence is DLQGFGVSIY. Residues 369–389 traverse the membrane as a helical segment; the sequence is LIQVIFGAVDLPAKLVSFLVI. At 390-395 the chain is on the cytoplasmic side; sequence NNVGRR. Residues 396–416 traverse the membrane as a helical segment; sequence PAQMASLLLAGICILINGVVP. Residues 417-425 lie on the Extracellular side of the membrane; it reads KDKSIVRTS. The chain crosses the membrane as a helical span at residues 426–446; it reads LAVLGKGCLASSFNCIFLYTG. The Cytoplasmic segment spans residues 447-456; it reads EVYPTMIRQT. A helical membrane pass occupies residues 457–477; the sequence is GLGMGSTLARVGSIVSPLVSM. Residues 478–484 are Extracellular-facing; it reads TAELYPS. A helical transmembrane segment spans residues 485–505; it reads VPLFIYGAVPVAASAAIALLP. At 506 to 549 the chain is on the cytoplasmic side; it reads ETLGQPLPDTVQDVENRRRGKTRKQQEELQKQMVPLQASAQVKN. A disordered region spans residues 521-549; the sequence is NRRRGKTRKQQEELQKQMVPLQASAQVKN.

It belongs to the major facilitator (TC 2.A.1) superfamily. Organic cation transporter (TC 2.A.1.19) family. In terms of processing, glycosylated. Glycosylation is necessary for proper targeting of the transporter to the plasma membrane.

It localises to the basolateral cell membrane. The protein localises to the basal cell membrane. The catalysed reaction is (6R)-L-erythro-5,6,7,8-tetrahydrobiopterin(out) + a dicarboxylate(in) = (6R)-L-erythro-5,6,7,8-tetrahydrobiopterin(in) + a dicarboxylate(out). The enzyme catalyses L-erythro-7,8-dihydrobiopterin(out) + a dicarboxylate(in) = L-erythro-7,8-dihydrobiopterin(in) + a dicarboxylate(out). It catalyses the reaction L-sepiapterin(out) + a dicarboxylate(in) = L-sepiapterin(in) + a dicarboxylate(out). It carries out the reaction prostaglandin F2alpha(out) + a dicarboxylate(in) = prostaglandin F2alpha(in) + a dicarboxylate(out). The catalysed reaction is prostaglandin E2(out) + a dicarboxylate(in) = prostaglandin E2(in) + a dicarboxylate(out). The enzyme catalyses 3',5'-cyclic AMP(out) + a dicarboxylate(in) = 3',5'-cyclic AMP(in) + a dicarboxylate(out). It catalyses the reaction 3',5'-cyclic GMP(out) + a dicarboxylate(in) = 3',5'-cyclic GMP(in) + a dicarboxylate(out). It carries out the reaction urate(out) + a dicarboxylate(in) = urate(in) + a dicarboxylate(out). The catalysed reaction is kynurenate(out) + glutarate(in) = kynurenate(in) + glutarate(out). The enzyme catalyses (indol-3-yl)acetate(out) + a dicarboxylate(in) = (indol-3-yl)acetate(in) + a dicarboxylate(out). It catalyses the reaction indoxyl sulfate(out) + a dicarboxylate(in) = indoxyl sulfate(in) + a dicarboxylate(out). It carries out the reaction N-benzoylglycine(out) + a dicarboxylate(in) = N-benzoylglycine(in) + a dicarboxylate(out). The catalysed reaction is 3-carboxy-4-methyl-5-propyl-2-furanpropanoate(out) + a dicarboxylate(in) = 3-carboxy-4-methyl-5-propyl-2-furanpropanoate(in) + a dicarboxylate(out). Secondary active transporter that functions as a Na(+)-independent organic anion (OA)/dicarboxylate antiporter where the uptake of one molecule of OA into the cell is coupled with an efflux of one molecule of intracellular dicarboxylate such as 2-oxoglutarate or glutarate. Mediates the uptake of OA across the basolateral side of proximal tubule epithelial cells, thereby contributing to the renal elimination of endogenous OA from the systemic circulation into the urine. Functions as a biopterin transporters involved in the uptake and the secretion of coenzymes tetrahydrobiopterin (BH4), dihydrobiopterin (BH2) and sepiapterin to urine, thereby determining baseline levels of blood biopterins. Transports prostaglandin E2 (PGE2) and prostaglandin F2-alpha (PGF2-alpha) and may contribute to their renal excretion. Also mediates the uptake of cyclic nucleotides such as cAMP and cGMP. Involved in the transport of neuroactive tryptophan metabolites kynurenate (KYNA) and xanthurenate (XA) and may contribute to their secretion from the brain. May transport glutamate. Also involved in the disposition of uremic toxins and potentially toxic xenobiotics by the renal organic anion secretory pathway, helping reduce their undesired toxicological effects on the body. Uremic toxins include the indoxyl sulfate (IS), hippurate/N-benzoylglycine (HA), indole acetate (IA), 3-carboxy-4- methyl-5-propyl-2-furanpropionate (CMPF) and urate. Xenobiotics include the mycotoxin ochratoxin (OTA). May also contribute to the transport of organic compounds in testes across the blood-testis-barrier. The chain is Solute carrier family 22 member 6 from Bos taurus (Bovine).